A 124-amino-acid chain; its full sequence is Small ribosomal subunit protein uS12 (124 aa).

Residues 1-23 are disordered; the sequence is MATINQLVRKPRVRQKQKSNVPA. Position 89 is a 3-methylthioaspartic acid (D89). A disordered region spans residues 103–124; sequence DTAGVGDRRQGRSKYGAKRPKG. A compositionally biased stretch (basic residues) spans 113-124; it reads GRSKYGAKRPKG.

The protein belongs to the universal ribosomal protein uS12 family. In terms of assembly, part of the 30S ribosomal subunit. Contacts proteins S8 and S17. May interact with IF1 in the 30S initiation complex.

In terms of biological role, with S4 and S5 plays an important role in translational accuracy. Interacts with and stabilizes bases of the 16S rRNA that are involved in tRNA selection in the A site and with the mRNA backbone. Located at the interface of the 30S and 50S subunits, it traverses the body of the 30S subunit contacting proteins on the other side and probably holding the rRNA structure together. The combined cluster of proteins S8, S12 and S17 appears to hold together the shoulder and platform of the 30S subunit. The chain is Small ribosomal subunit protein uS12 from Nitrosococcus oceani (strain ATCC 19707 / BCRC 17464 / JCM 30415 / NCIMB 11848 / C-107).